Here is a 233-residue protein sequence, read N- to C-terminus: B-cell lymphoma/leukemia 10 (233 aa).

At methionine 1 the chain carries N-acetylmethionine. Residues leucine 13–aspartate 101 enclose the CARD domain. Residues lysine 17, lysine 31, and lysine 63 each participate in a glycyl lysine isopeptide (Lys-Gly) (interchain with G-Cter in ubiquitin) cross-link. Serine 138 bears the Phosphoserine mark. A disordered region spans residues phenylalanine 187–glutamine 233. Residues proline 195 to proline 205 are compositionally biased toward pro residues.

In terms of assembly, homomultimer; homooligomerized following recruitment by CARD domain-containing proteins that form a nucleating helical template that recruits BCL10 via CARD-CARD interaction. Self-associates by CARD-CARD interaction and interacts with other CARD-proteins such as CARD9, CARD10, CARD11 and CARD14. Forms a complex with CARD14 and MALT1; resulting in the formation of a CBM (CARD14-BCL10-MALT1) complex. Forms a complex with CARD11 and MALT1; resulting in the formation of a CBM (CARD11-BCL10-MALT1) complex. Forms a complex with CARD9 and MALT1; resulting in the formation of a CBM (CARD9-BCL10-MALT1) complex. Found in a membrane raft complex, at least composed of BCL10, CARD11, DPP4 and IKBKB. Binds caspase-9 with its C-terminal domain. Interacts with TRAF2 and BIRC2/c-IAP2. Interacts with PELI2 and SOCS3; these interactions may be mutually exclusive. In terms of processing, phosphorylated. Phosphorylation results in dissociation from TRAF2 and binding to BIRC2/c-IAP2. Phosphorylated by IKBKB/IKKB. Ubiquitinated via both 'Lys-63'-linked and linear ('Met-1'-linked) polyubiquitin chains in response to T-cell receptor (TCR) activation. Ubiquitination is recognized by IKBKG/NEMO, the regulatory subunit of I-kappa-B kinase (IKK), and is required for TCR-induced NF-kappa-B activation. Linear ubiquitination at Lys-17, Lys-31 and Lys-63 is mediated by RNF31/HOIP; linear ubiquitination is recognized with much higher affinity than 'Lys-63'-linked ubiquitin by IKBKG/NEMO. CARD11 is required for linear ubiquitination by HOIP by promoting the targeting of BCL10 to RNF31/HOIP. Post-translationally, proteolytically cleaved by MALT1; required for T-cell activation. Ubiquitous.

Its subcellular location is the cytoplasm. It is found in the perinuclear region. It localises to the membrane raft. Plays a key role in both adaptive and innate immune signaling by bridging CARD domain-containing proteins to immune activation. Acts by channeling adaptive and innate immune signaling downstream of CARD domain-containing proteins CARD9, CARD11 and CARD14 to activate NF-kappa-B and MAP kinase p38 (MAPK11, MAPK12, MAPK13 and/or MAPK14) pathways which stimulate expression of genes encoding pro-inflammatory cytokines and chemokines. Recruited by activated CARD domain-containing proteins: homooligomerized CARD domain-containing proteins form a nucleating helical template that recruits BCL10 via CARD-CARD interaction, thereby promoting polymerization of BCL10, subsequent recruitment of MALT1 and formation of a CBM complex. This leads to activation of NF-kappa-B and MAP kinase p38 (MAPK11, MAPK12, MAPK13 and/or MAPK14) pathways which stimulate expression of genes encoding pro-inflammatory cytokines and chemokines. Activated by CARD9 downstream of C-type lectin receptors; CARD9-mediated signals are essential for antifungal immunity. Activated by CARD11 downstream of T-cell receptor (TCR) and B-cell receptor (BCR). Promotes apoptosis, pro-caspase-9 maturation and activation of NF-kappa-B via NIK and IKK. This Homo sapiens (Human) protein is B-cell lymphoma/leukemia 10.